Here is a 311-residue protein sequence, read N- to C-terminus: MQEIQKNTKKEQYNLNKLQKRLRRNVGEAIADFNMIEEGDRIMVCLSGGKDSYTMLEILRNLQQSAPINFSLVAVNLDQKQPGFPEHILPAYLEQLGVEYKIVEENTYGIVKEKIPEGKTTCSLCSRLRRGILYRTATELGATKIALGHHRDDILQTLFLNMFYGGKMKGMPPKLMSDDGKHIVIRPLAYCREKDIVRFAEAKAFPIIPCNLCGSQPNLQRQVIADMLRDWDKRYPGRIETMFSAMQNVVPSHLCDTNLFDFKGITHGSEVVDGGDLAFDREEIPLQPAGWQPEEDDTALEALRLDVIEVK.

The short motif at 47-52 (SGGKDS) is the PP-loop motif element. [4Fe-4S] cluster contacts are provided by cysteine 122, cysteine 125, and cysteine 213.

It belongs to the TtcA family. As to quaternary structure, homodimer. It depends on Mg(2+) as a cofactor. [4Fe-4S] cluster serves as cofactor.

It localises to the cytoplasm. The catalysed reaction is cytidine(32) in tRNA + S-sulfanyl-L-cysteinyl-[cysteine desulfurase] + AH2 + ATP = 2-thiocytidine(32) in tRNA + L-cysteinyl-[cysteine desulfurase] + A + AMP + diphosphate + H(+). It functions in the pathway tRNA modification. Its function is as follows. Catalyzes the ATP-dependent 2-thiolation of cytidine in position 32 of tRNA, to form 2-thiocytidine (s(2)C32). The sulfur atoms are provided by the cysteine/cysteine desulfurase (IscS) system. The chain is tRNA-cytidine(32) 2-sulfurtransferase from Salmonella dublin (strain CT_02021853).